A 926-amino-acid chain; its full sequence is DNA mismatch repair protein MutS (926 aa).

A disordered region spans residues 1 to 60 (MAASQNPIQGSLFGGNEESDLNKAEKLKGSERSNVNLSHQQLKEDASLRPRIKQTPKNPN). Residues 20–31 (DLNKAEKLKGSE) are compositionally biased toward basic and acidic residues. 726 to 733 (GPNASGKS) lines the ATP pocket.

Belongs to the DNA mismatch repair MutS family.

Functionally, this protein is involved in the repair of mismatches in DNA. It is possible that it carries out the mismatch recognition step. This protein has a weak ATPase activity. This chain is DNA mismatch repair protein MutS, found in Prochlorococcus marinus (strain NATL2A).